The sequence spans 385 residues: Cytochrome b (385 aa).

4 consecutive transmembrane segments (helical) span residues 32–52, 76–98, 113–133, and 179–199; these read FGSL…TLAM, WLIR…LHIG, AWIL…LGYV, and FFAL…MHLI. 2 residues coordinate heme b: H82 and H96. Residues H183 and H197 each coordinate heme b. H202 serves as a coordination point for a ubiquinone. 4 helical membrane passes run 226–246, 290–310, 322–342, and 349–369; these read YLFK…IFVF, LLGV…PKTD, LSKI…QLGA, and FIEF…IIMP.

The protein belongs to the cytochrome b family. As to quaternary structure, fungal cytochrome b-c1 complex contains 10 subunits; 3 respiratory subunits, 2 core proteins and 5 low-molecular weight proteins. Cytochrome b-c1 complex is a homodimer. It depends on heme b as a cofactor.

It localises to the mitochondrion inner membrane. Its function is as follows. Component of the ubiquinol-cytochrome c reductase complex (complex III or cytochrome b-c1 complex) that is part of the mitochondrial respiratory chain. The b-c1 complex mediates electron transfer from ubiquinol to cytochrome c. Contributes to the generation of a proton gradient across the mitochondrial membrane that is then used for ATP synthesis. The sequence is that of Cytochrome b (cob) from Akanthomyces muscarius (Entomopathogenic fungus).